The chain runs to 358 residues: Membrane-bound lytic murein transglycosylase C (358 aa).

Residues 1–16 (MKKILALLVIAPLLIS) form the signal peptide. Cys-17 carries the N-palmitoyl cysteine lipid modification. Cys-17 is lipidated: S-diacylglycerol cysteine.

The protein belongs to the transglycosylase Slt family.

Its subcellular location is the cell outer membrane. The enzyme catalyses Exolytic cleavage of the (1-&gt;4)-beta-glycosidic linkage between N-acetylmuramic acid (MurNAc) and N-acetylglucosamine (GlcNAc) residues in peptidoglycan, from either the reducing or the non-reducing ends of the peptidoglycan chains, with concomitant formation of a 1,6-anhydrobond in the MurNAc residue.. In terms of biological role, murein-degrading enzyme. May play a role in recycling of muropeptides during cell elongation and/or cell division. The polypeptide is Membrane-bound lytic murein transglycosylase C (Serratia proteamaculans (strain 568)).